A 453-amino-acid polypeptide reads, in one-letter code: Allantoinase (453 aa).

The Zn(2+) site is built by His59, His61, Lys146, His186, His242, and Asp315. N6-carboxylysine is present on Lys146.

The protein belongs to the metallo-dependent hydrolases superfamily. Allantoinase family. As to quaternary structure, homotetramer. Zn(2+) serves as cofactor. In terms of processing, carboxylation allows a single lysine to coordinate two zinc ions.

It carries out the reaction (S)-allantoin + H2O = allantoate + H(+). The protein operates within nitrogen metabolism; (S)-allantoin degradation; allantoate from (S)-allantoin: step 1/1. Its function is as follows. Catalyzes the conversion of allantoin (5-ureidohydantoin) to allantoic acid by hydrolytic cleavage of the five-member hydantoin ring. The chain is Allantoinase from Salmonella agona (strain SL483).